The primary structure comprises 98 residues: NADH-ubiquinone oxidoreductase chain 4L (98 aa).

Helical transmembrane passes span 1 to 21 (MTPT…GMLT), 29 to 49 (SLLC…LIAL), and 61 to 81 (IILL…LVSI).

This sequence belongs to the complex I subunit 4L family. As to quaternary structure, core subunit of respiratory chain NADH dehydrogenase (Complex I) which is composed of 45 different subunits.

Its subcellular location is the mitochondrion inner membrane. It catalyses the reaction a ubiquinone + NADH + 5 H(+)(in) = a ubiquinol + NAD(+) + 4 H(+)(out). Functionally, core subunit of the mitochondrial membrane respiratory chain NADH dehydrogenase (Complex I) which catalyzes electron transfer from NADH through the respiratory chain, using ubiquinone as an electron acceptor. Part of the enzyme membrane arm which is embedded in the lipid bilayer and involved in proton translocation. The sequence is that of NADH-ubiquinone oxidoreductase chain 4L (MT-ND4L) from Macaca pagensis (Mentawai macaque).